The following is an 867-amino-acid chain: Retinoblastoma-related protein 1 (867 aa).

The domain A stretch occupies residues 275–476 (TPVTSAMTTA…EKGSSLYNSL (202 aa)). The pocket; binds RPD3I and RBAP1 stretch occupies residues 275–722 (TPVTSAMTTA…NEVFVPAAKP (448 aa)). The spacer stretch occupies residues 477 to 594 (IVARPSVASE…PVGGNEKCAD (118 aa)). The interval 512–563 (EGLPATPSKKRAAGPDDNADPRSPKRSCNESRNTVVERNLQTPPPKQSHMVS) is disordered. Positions 530-540 (ADPRSPKRSCN) are enriched in basic and acidic residues. Residues 541 to 552 (ESRNTVVERNLQ) show a composition bias toward polar residues. The segment at 595–722 (VTIHIFFSKI…NEVFVPAAKP (128 aa)) is domain B. 2 disordered regions span residues 734 to 762 (PEDKKNASGQIPGSPKPSPFPNLPDMSPK) and 843 to 867 (QINGGSTSDPAAAFSPLSKKRETDT).

It belongs to the retinoblastoma protein (RB) family. Interacts with RPD3I, RBAP1, the Arabidopsis cyclin CYCD3-1, the mastrevirus replication-associated protein A (RepA) and the begomovirus replication-associated protein (Rep). Ubiquitous.

The protein localises to the nucleus. In terms of biological role, regulator of biological processes that recruits a histone deacetylase to control gene transcription. May play a role in the entry into mitosis, negatively regulating the cell proliferation. Formation of stable complexes with geminiviridae replication-associated proteins may create a cellular environment which favors viral DNA replication. The sequence is that of Retinoblastoma-related protein 1 (RBR1) from Zea mays (Maize).